We begin with the raw amino-acid sequence, 183 residues long: Ubiquitin carboxyl-terminal hydrolase 17-like protein 23 (183 aa).

In terms of domain architecture, USP spans 80–183 (AGLQNMGNTC…KACLPGHKQV (104 aa)).

It belongs to the peptidase C19 family. USP17 subfamily.

The protein resides in the nucleus. Its subcellular location is the endoplasmic reticulum. The sequence is that of Ubiquitin carboxyl-terminal hydrolase 17-like protein 23 (USP17L23) from Homo sapiens (Human).